The chain runs to 260 residues: tRNA (guanine-N(7)-)-methyltransferase (260 aa).

Residues 1–37 (MIHDPNDAGLPDQLPTPSSEAENSPAGDTTPPEEALH) form a disordered region. 4 residues coordinate S-adenosyl-L-methionine: Glu90, Glu115, Asp142, and Asp165. Asp165 is a catalytic residue. Residues Lys169, Asp201, and 236-239 (TKFE) each bind substrate.

Belongs to the class I-like SAM-binding methyltransferase superfamily. TrmB family.

It catalyses the reaction guanosine(46) in tRNA + S-adenosyl-L-methionine = N(7)-methylguanosine(46) in tRNA + S-adenosyl-L-homocysteine. It functions in the pathway tRNA modification; N(7)-methylguanine-tRNA biosynthesis. Functionally, catalyzes the formation of N(7)-methylguanine at position 46 (m7G46) in tRNA. In Paraburkholderia xenovorans (strain LB400), this protein is tRNA (guanine-N(7)-)-methyltransferase.